Here is a 257-residue protein sequence, read N- to C-terminus: tRNA pseudouridine synthase A (257 aa).

The active-site Nucleophile is the aspartate 57. Tyrosine 115 lines the substrate pocket.

It belongs to the tRNA pseudouridine synthase TruA family. As to quaternary structure, homodimer.

The enzyme catalyses uridine(38/39/40) in tRNA = pseudouridine(38/39/40) in tRNA. Formation of pseudouridine at positions 38, 39 and 40 in the anticodon stem and loop of transfer RNAs. The sequence is that of tRNA pseudouridine synthase A from Lawsonia intracellularis (strain PHE/MN1-00).